A 255-amino-acid polypeptide reads, in one-letter code: Acetylglutamate kinase (255 aa).

Residues 40–41 (GG), Arg-62, and Asn-153 contribute to the substrate site.

Belongs to the acetylglutamate kinase family. ArgB subfamily.

Its subcellular location is the cytoplasm. The enzyme catalyses N-acetyl-L-glutamate + ATP = N-acetyl-L-glutamyl 5-phosphate + ADP. It participates in amino-acid biosynthesis; L-arginine biosynthesis; N(2)-acetyl-L-ornithine from L-glutamate: step 2/4. In terms of biological role, catalyzes the ATP-dependent phosphorylation of N-acetyl-L-glutamate. This Bacillus thuringiensis (strain Al Hakam) protein is Acetylglutamate kinase.